Reading from the N-terminus, the 145-residue chain is Large ribosomal subunit protein uL13 (145 aa).

This sequence belongs to the universal ribosomal protein uL13 family. In terms of assembly, part of the 50S ribosomal subunit.

Its function is as follows. This protein is one of the early assembly proteins of the 50S ribosomal subunit, although it is not seen to bind rRNA by itself. It is important during the early stages of 50S assembly. The protein is Large ribosomal subunit protein uL13 of Haloquadratum walsbyi (strain DSM 16790 / HBSQ001).